We begin with the raw amino-acid sequence, 186 residues long: Peptidoglycan-recognition protein SD (186 aa).

The N-terminal stretch at 1–18 (MTWIGLLIVGLTAIAVQG) is a signal peptide. An N-acetylmuramoyl-L-alanine amidase domain is found at 47–169 (AVIAHTAGGA…RQVSATKSPG (123 aa)). A disulfide bridge connects residues Cys57 and Cys63. A glycan (N-linked (GlcNAc...) asparagine) is linked at Asn181.

This sequence belongs to the N-acetylmuramoyl-L-alanine amidase 2 family. In larvae, it is mainly expressed in fat body. Also expressed in uninduced hemocytes and mbn-2 cells.

The protein resides in the secreted. Its function is as follows. Peptidoglycan-recognition protein that plays a key role in innate immunity by binding to peptidoglycans (PGN) of Gram-positive bacteria and activating the Toll pathway. Has no activity against on Gram-negative bacteria and fungi. Shows some partial redundancy with PRPGP-SA in Gram-positive bacteria recognition. May act by activating the proteolytic cleavage of Spatzle and the subsequent activation of Toll pathway. Recognizes S.aureus PGN. The protein is Peptidoglycan-recognition protein SD (PGRP-SD) of Drosophila melanogaster (Fruit fly).